The sequence spans 64 residues: Large ribosomal subunit protein bL35 (64 aa).

This sequence belongs to the bacterial ribosomal protein bL35 family.

This Wolinella succinogenes (strain ATCC 29543 / DSM 1740 / CCUG 13145 / JCM 31913 / LMG 7466 / NCTC 11488 / FDC 602W) (Vibrio succinogenes) protein is Large ribosomal subunit protein bL35.